The following is an 802-amino-acid chain: Leucine--tRNA ligase (802 aa).

The short motif at 40-51 (PYPSGAGLHVGH) is the 'HIGH' region element. The 'KMSKS' region motif lies at 576–580 (KMSKS). K579 is a binding site for ATP.

Belongs to the class-I aminoacyl-tRNA synthetase family.

Its subcellular location is the cytoplasm. The catalysed reaction is tRNA(Leu) + L-leucine + ATP = L-leucyl-tRNA(Leu) + AMP + diphosphate. This chain is Leucine--tRNA ligase, found in Bacillus anthracis (strain A0248).